A 319-amino-acid polypeptide reads, in one-letter code: Ribose-phosphate pyrophosphokinase (319 aa).

ATP-binding positions include 41–43 (DGE) and 100–101 (RQ). 2 residues coordinate Mg(2+): histidine 134 and aspartate 176. Residue lysine 199 is part of the active site. D-ribose 5-phosphate-binding positions include arginine 201, aspartate 225, and 229-233 (DTAGT).

The protein belongs to the ribose-phosphate pyrophosphokinase family. Class I subfamily. Homohexamer. Requires Mg(2+) as cofactor.

It localises to the cytoplasm. The catalysed reaction is D-ribose 5-phosphate + ATP = 5-phospho-alpha-D-ribose 1-diphosphate + AMP + H(+). The protein operates within metabolic intermediate biosynthesis; 5-phospho-alpha-D-ribose 1-diphosphate biosynthesis; 5-phospho-alpha-D-ribose 1-diphosphate from D-ribose 5-phosphate (route I): step 1/1. Functionally, involved in the biosynthesis of the central metabolite phospho-alpha-D-ribosyl-1-pyrophosphate (PRPP) via the transfer of pyrophosphoryl group from ATP to 1-hydroxyl of ribose-5-phosphate (Rib-5-P). This is Ribose-phosphate pyrophosphokinase from Clostridium perfringens (strain 13 / Type A).